Here is a 371-residue protein sequence, read N- to C-terminus: o-succinylbenzoate synthase (371 aa).

Catalysis depends on Lys-164, which acts as the Proton donor. Mg(2+) is bound by residues Asp-189, Glu-214, and Asp-239. The active-site Proton acceptor is Lys-263.

The protein belongs to the mandelate racemase/muconate lactonizing enzyme family. MenC type 2 subfamily. Requires a divalent metal cation as cofactor.

The catalysed reaction is (1R,6R)-6-hydroxy-2-succinyl-cyclohexa-2,4-diene-1-carboxylate = 2-succinylbenzoate + H2O. It functions in the pathway quinol/quinone metabolism; 1,4-dihydroxy-2-naphthoate biosynthesis; 1,4-dihydroxy-2-naphthoate from chorismate: step 4/7. The protein operates within quinol/quinone metabolism; menaquinone biosynthesis. Converts 2-succinyl-6-hydroxy-2,4-cyclohexadiene-1-carboxylate (SHCHC) to 2-succinylbenzoate (OSB). Does not show detectable N-acylamino acid racemase (NAAAR) activity with N-acetyl-S-methionine as substrate. In Bacillus subtilis (strain 168), this protein is o-succinylbenzoate synthase.